The following is a 136-amino-acid chain: Large ribosomal subunit protein uL16 (136 aa).

This sequence belongs to the universal ribosomal protein uL16 family. In terms of assembly, part of the 50S ribosomal subunit.

Its function is as follows. Binds 23S rRNA and is also seen to make contacts with the A and possibly P site tRNAs. The sequence is that of Large ribosomal subunit protein uL16 from Photobacterium profundum (strain SS9).